Consider the following 461-residue polypeptide: uncharacterized protein (461 aa).

Helical transmembrane passes span 18–38 and 124–144; these read IITWLLVILPFPILGTLFLIY and FIFLEYFIIAEGLMWGEILSI. 2 consecutive PLD phosphodiesterase domains span residues 197 to 224 and 374 to 401; these read YNYRDHRKILVIDNKVAFNGGINLADEY and TPGFVHAKVFIADDIKAVVGTINLDYRS.

This sequence belongs to the phospholipase D family. Cardiolipin synthase subfamily.

It localises to the cell membrane. This is an uncharacterized protein from Streptococcus mutans serotype c (strain ATCC 700610 / UA159).